The primary structure comprises 260 residues: Thrombin-like enzyme 1 (260 aa).

An N-terminal signal peptide occupies residues 1–18 (MVLITVLANLLILQLSYA). Residues 19 to 24 (QKSSEL) constitute a propeptide that is removed on maturation. Residues 25-251 (VIGGDECNIN…HLDWIQSIIA (227 aa)) enclose the Peptidase S1 domain. Disulfide bonds link Cys-31–Cys-165, Cys-52–Cys-68, Cys-102–Cys-258, Cys-144–Cys-212, Cys-176–Cys-191, and Cys-202–Cys-227. The active-site Charge relay system is His-67. Asn-105 carries N-linked (GlcNAc...) asparagine glycosylation. The active-site Charge relay system is the Asp-112. N-linked (GlcNAc...) asparagine glycans are attached at residues Asn-156 and Asn-172. The Charge relay system role is filled by Ser-206. Asn-253 carries N-linked (GlcNAc...) asparagine glycosylation.

It belongs to the peptidase S1 family. Snake venom subfamily. In terms of assembly, monomer. As to expression, expressed by the venom gland.

It localises to the secreted. In terms of biological role, thrombin-like snake venom serine protease. In Trimeresurus albolabris (White-lipped pit viper), this protein is Thrombin-like enzyme 1.